Here is a 132-residue protein sequence, read N- to C-terminus: Small ribosomal subunit protein uS8c (132 aa).

Belongs to the universal ribosomal protein uS8 family. As to quaternary structure, part of the 30S ribosomal subunit.

Its subcellular location is the plastid. The protein resides in the chloroplast. Functionally, one of the primary rRNA binding proteins, it binds directly to 16S rRNA central domain where it helps coordinate assembly of the platform of the 30S subunit. The chain is Small ribosomal subunit protein uS8c (rps8) from Amborella trichopoda.